We begin with the raw amino-acid sequence, 129 residues long: Histone H2A-IV (129 aa).

It belongs to the histone H2A family. The nucleosome is a histone octamer containing two molecules each of H2A, H2B, H3 and H4 assembled in one H3-H4 heterotetramer and two H2A-H2B heterodimers. The octamer wraps approximately 147 bp of DNA.

Its subcellular location is the nucleus. The protein localises to the chromosome. In terms of biological role, core component of nucleosome. Nucleosomes wrap and compact DNA into chromatin, limiting DNA accessibility to the cellular machineries which require DNA as a template. Histones thereby play a central role in transcription regulation, DNA repair, DNA replication and chromosomal stability. DNA accessibility is regulated via a complex set of post-translational modifications of histones, also called histone code, and nucleosome remodeling. In Volvox carteri (Green alga), this protein is Histone H2A-IV.